The primary structure comprises 78 residues: Small ribosomal subunit protein bS18 (78 aa).

This sequence belongs to the bacterial ribosomal protein bS18 family. In terms of assembly, part of the 30S ribosomal subunit. Forms a tight heterodimer with protein bS6.

Functionally, binds as a heterodimer with protein bS6 to the central domain of the 16S rRNA, where it helps stabilize the platform of the 30S subunit. This Limosilactobacillus reuteri (strain DSM 20016) (Lactobacillus reuteri) protein is Small ribosomal subunit protein bS18.